The primary structure comprises 128 residues: Fluoride-specific ion channel FluC (128 aa).

4 helical membrane passes run 1-21 (MPER…GATA), 45-65 (LAGC…SLVS), 70-90 (LLLA…MYEI), and 99-119 (IFYS…CLYF). Na(+)-binding residues include Gly78 and Thr81.

The protein belongs to the fluoride channel Fluc/FEX (TC 1.A.43) family.

The protein localises to the cell inner membrane. The enzyme catalyses fluoride(in) = fluoride(out). Its activity is regulated as follows. Na(+) is not transported, but it plays an essential structural role and its presence is essential for fluoride channel function. In terms of biological role, fluoride-specific ion channel. Important for reducing fluoride concentration in the cell, thus reducing its toxicity. In Chlorobium phaeobacteroides (strain BS1), this protein is Fluoride-specific ion channel FluC.